Here is a 458-residue protein sequence, read N- to C-terminus: UDP-N-acetylmuramoylalanine--D-glutamate ligase (458 aa).

Residue 124–130 participates in ATP binding; it reads GSDGKTT.

This sequence belongs to the MurCDEF family.

It is found in the cytoplasm. The enzyme catalyses UDP-N-acetyl-alpha-D-muramoyl-L-alanine + D-glutamate + ATP = UDP-N-acetyl-alpha-D-muramoyl-L-alanyl-D-glutamate + ADP + phosphate + H(+). Its pathway is cell wall biogenesis; peptidoglycan biosynthesis. Functionally, cell wall formation. Catalyzes the addition of glutamate to the nucleotide precursor UDP-N-acetylmuramoyl-L-alanine (UMA). This Clostridium novyi (strain NT) protein is UDP-N-acetylmuramoylalanine--D-glutamate ligase.